The chain runs to 279 residues: 1-(5-phosphoribosyl)-5-[(5-phosphoribosylamino)methylideneamino] imidazole-4-carboxamide isomerase (279 aa).

The protein belongs to the HisA/HisF family.

It localises to the cytoplasm. It carries out the reaction 1-(5-phospho-beta-D-ribosyl)-5-[(5-phospho-beta-D-ribosylamino)methylideneamino]imidazole-4-carboxamide = 5-[(5-phospho-1-deoxy-D-ribulos-1-ylimino)methylamino]-1-(5-phospho-beta-D-ribosyl)imidazole-4-carboxamide. It functions in the pathway amino-acid biosynthesis; L-histidine biosynthesis; L-histidine from 5-phospho-alpha-D-ribose 1-diphosphate: step 4/9. The polypeptide is 1-(5-phosphoribosyl)-5-[(5-phosphoribosylamino)methylideneamino] imidazole-4-carboxamide isomerase (HIS6) (Candida albicans (Yeast)).